The chain runs to 339 residues: MNWELLLWLLVLCALLLLLVQLLRFLRADGDLTLLWAEWQGRRPEWELTDMVVWVTGASSGIGEELAYQLSKLGVSLVLSARRVHELERVKRRCLENGNLKEKDILVLPLDLTDTGSHEAATKAVLQEFGRIDILVNNGGMSQRSLCMDTSLDVYRKLIELNYLGTVSLTKCVLPHMIERKQGKIVTVNSILGIISVPLSIGYCASKHALRGFFNGLRTELATYPGIIVSNICPGPVQSNIVENSLAGEVTKTIGNNGDQSHKMTTSRCVRLMLISMANDLKEVWISEQPFLLVTYLWQYMPTWAWWITNKMGKKRIENFKSGVDADSSYFKIFKTKHD.

The N-terminal stretch at 1-28 is a signal peptide; it reads MNWELLLWLLVLCALLLLLVQLLRFLRA. The NAD(+) site is built by serine 60 and isoleucine 62. Serine 190 contacts substrate. Tyrosine 203, lysine 207, and serine 239 together coordinate NAD(+). Tyrosine 203 serves as the catalytic Proton acceptor.

This sequence belongs to the short-chain dehydrogenases/reductases (SDR) family. Found predominantly in the adrenal glands, liver, thyroid, prostate, small intestine, colon, stomach, kidney and brain. Lower levels observed in skeletal muscle, the lung and the spleen.

It localises to the endoplasmic reticulum membrane. It carries out the reaction all-trans-retinol + NADP(+) = all-trans-retinal + NADPH + H(+). The enzyme catalyses 5alpha-androstane-3alpha,17beta-diol + NADP(+) = 17beta-hydroxy-5alpha-androstan-3-one + NADPH + H(+). In terms of biological role, NADPH-dependent oxidoreductase which catalyzes the reduction of a variety of compounds bearing carbonyl groups including steroids, retinoids and xenobiotics. Catalyzes the reduction/inactivation of 5alpha-dihydrotestosterone to 3alpha-androstanediol, with a possible role in the modulation of androgen receptor function. Involved in the reduction of all-trans-retinal to all-trans-retinol. Converts cortisone to 20beta-dihydrocortisone in vitro, although the physiological relevance of this activity is questionable. Reduces exogenous compounds such as quinones (1,2-naphtoquinone, 9,10-phenantrenequinone and benzoquinone) and other xenobiotics (alpha-diketones) in vitro, suggesting a role in the biotransformation of xenobiotics with carbonyl group. A dehydrogenase activity has not been detected so far. May play a role as tumor suppressor. This is Dehydrogenase/reductase SDR family member 7 from Homo sapiens (Human).